The sequence spans 155 residues: Small ribosomal subunit protein uS10m (155 aa).

This sequence belongs to the universal ribosomal protein uS10 family. Component of the mitochondrial ribosome small subunit (28S) which comprises a 12S rRNA and about 30 distinct proteins.

It localises to the mitochondrion. This chain is Small ribosomal subunit protein uS10m (Mrps10), found in Rattus norvegicus (Rat).